A 481-amino-acid chain; its full sequence is tRNA-guanine(15) transglycosylase (481 aa).

The active-site Nucleophile is Asp87. Substrate is bound by residues Asp122 and Ala191. Residues Cys273, Cys275, and Cys278 each coordinate Zn(2+).

The protein belongs to the archaeosine tRNA-ribosyltransferase family. It depends on Zn(2+) as a cofactor.

It catalyses the reaction guanosine(15) in tRNA + 7-cyano-7-deazaguanine = 7-cyano-7-carbaguanosine(15) in tRNA + guanine. It functions in the pathway tRNA modification; archaeosine-tRNA biosynthesis. In terms of biological role, exchanges the guanine residue with 7-cyano-7-deazaguanine (preQ0) at position 15 in the dihydrouridine loop (D-loop) of archaeal tRNAs. The protein is tRNA-guanine(15) transglycosylase of Archaeoglobus fulgidus (strain ATCC 49558 / DSM 4304 / JCM 9628 / NBRC 100126 / VC-16).